A 1192-amino-acid polypeptide reads, in one-letter code: Pyruvate carboxylase (1192 aa).

Residues 1 to 23 are disordered; sequence MAAPRQPEEAVDDTEFIDDHHDQ. The region spanning 40–492 is the Biotin carboxylation domain; it reads QFQKILVANR…WTTFIDDTPE (453 aa). 3 residues coordinate ATP: Lys158, Glu242, and His277. Residues 162-359 form the ATP-grasp domain; the sequence is RQLAIRCDVP…IVAAQIQIAA (198 aa). Residue Arg334 is part of the active site. The 269-residue stretch at 578–846 folds into the Pyruvate carboxyltransferase domain; sequence CLIMDTTWRD…DPGLNSAQVR (269 aa). Substrate contacts are provided by residues 586-590 and Arg659; that span reads RDAHQ. Asp587 contributes to the a divalent metal cation binding site. Residues Lys755, His785, and His787 each contribute to the a divalent metal cation site. At Lys755 the chain carries N6-carboxylysine. Residue Thr920 coordinates substrate. The Biotinyl-binding domain maps to 1115-1190; sequence KAELGDSSQV…DGQDLVCKIV (76 aa). At Lys1156 the chain carries N6-biotinyllysine.

Requires biotin as cofactor. Zn(2+) serves as cofactor.

It localises to the cytoplasm. It carries out the reaction hydrogencarbonate + pyruvate + ATP = oxaloacetate + ADP + phosphate + H(+). Its pathway is carbohydrate biosynthesis; gluconeogenesis. Pyruvate carboxylase catalyzes a 2-step reaction, involving the ATP-dependent carboxylation of the covalently attached biotin in the first step and the transfer of the carboxyl group to pyruvate in the second. This Aspergillus niger protein is Pyruvate carboxylase (pyc).